Reading from the N-terminus, the 445-residue chain is Methionine aminopeptidase 2 (445 aa).

The tract at residues 1–80 (MAAQVASGVG…TSKVQTEPPR (80 aa)) is disordered. The span at 57–71 (AKKKKKKTKKKKKGT) shows a compositional bias: basic residues. Residue His195 participates in substrate binding. Positions 215, 226, and 295 each coordinate a divalent metal cation. Residue His303 participates in substrate binding. A divalent metal cation is bound by residues Glu331 and Glu426.

Belongs to the peptidase M24A family. Methionine aminopeptidase eukaryotic type 2 subfamily. Co(2+) serves as cofactor. The cofactor is Zn(2+). It depends on Mn(2+) as a cofactor. Fe(2+) is required as a cofactor.

The protein localises to the cytoplasm. The enzyme catalyses Release of N-terminal amino acids, preferentially methionine, from peptides and arylamides.. Its function is as follows. Cotranslationally removes the N-terminal methionine from nascent proteins. The N-terminal methionine is often cleaved when the second residue in the primary sequence is small and uncharged (Met-Ala-, Cys, Gly, Pro, Ser, Thr, or Val). In Paracoccidioides brasiliensis (strain Pb03), this protein is Methionine aminopeptidase 2.